A 110-amino-acid polypeptide reads, in one-letter code: Nucleoid-associated protein YE3092 (110 aa).

The protein belongs to the YbaB/EbfC family. Homodimer.

The protein resides in the cytoplasm. Its subcellular location is the nucleoid. Functionally, binds to DNA and alters its conformation. May be involved in regulation of gene expression, nucleoid organization and DNA protection. This is Nucleoid-associated protein YE3092 from Yersinia enterocolitica serotype O:8 / biotype 1B (strain NCTC 13174 / 8081).